Consider the following 92-residue polypeptide: Non-specific lipid-transfer protein 1 (92 aa).

4 cysteine pairs are disulfide-bonded: Cys4/Cys52, Cys14/Cys28, Cys29/Cys74, and Cys50/Cys88.

It belongs to the plant LTP family. In terms of tissue distribution, expressed in seeds and, at very low levels, in pulp of fruit (at protein level).

Its function is as follows. Plant non-specific lipid-transfer proteins transfer phospholipids as well as galactolipids across membranes. May play a role in wax or cutin deposition in the cell walls of expanding epidermal cells and certain secretory tissues. The protein is Non-specific lipid-transfer protein 1 of Actinidia deliciosa (Kiwi).